The primary structure comprises 357 residues: SPbeta prophage-derived pesticidal crystal protein-like YokG (357 aa).

Belongs to the cry6A endotoxin family.

The protein is SPbeta prophage-derived pesticidal crystal protein-like YokG (yokG) of Bacillus subtilis (strain 168).